The sequence spans 760 residues: Heat shock transcription factor (760 aa).

Disordered regions lie at residues 1-132 (MIMN…PPVV) and 206-276 (FHPL…GPKT). Composition is skewed to polar residues over residues 19–31 (TESN…SSPS) and 38–88 (RSGT…SNKL). The segment covering 119-130 (DYKDSIDLDKPP) has biased composition (basic and acidic residues). Over residues 221 to 247 (AGPANNSQQQQQQQQQDSSIPSDGISS) the composition is skewed to low complexity. The DNA-binding element occupies 276-385 (TRPAFVMKIW…EDLLDKIVRN (110 aa)). The interval 414 to 467 (ELETIKMNQYVISEDLRRVRQDNKMLWQENYLNRERNQVQGRTLDKILKFLSVV) is involved in trimerization. Disordered stretches follow at residues 492–545 (TQYR…NNNN), 560–582 (LTNR…EGSI), 609–630 (HQPG…SAPS), and 674–760 (QEQH…VSDH). The span at 515-539 (NSRFARDNNQTAQPTYESPLSTSDT) shows a compositional bias: polar residues. At serine 570 the chain carries Phosphoserine. Threonine 574 is subject to Phosphothreonine. Serine 576 is modified (phosphoserine). Threonine 577 is subject to Phosphothreonine. Residues 613-628 (ATTNNNNHSSSTAISA) are compositionally biased toward low complexity. Residues 646–684 (RNLDDLEKHINKEGQSIQQVQDWIDKLAQEQHEKQQQQQ) adopt a coiled-coil conformation. 2 stretches are compositionally biased toward polar residues: residues 701-722 (ATTT…NISF) and 731-742 (PGSNVSSNINDS). Basic and acidic residues predominate over residues 744-760 (GNEKKSKKRSIEEVSDH).

The protein belongs to the HSF family. In terms of assembly, homotrimer. Homotrimerization increases the affinity of HSF1 to DNA. Interacts with HSP90. In terms of processing, activated by phosphorylation of at least Ser-570, Thr-574, Ser-576 and Thr-577 in response to heat shock. Additional unidentified residues are also phosphorylated in response to heat shock.

Its subcellular location is the nucleus. Functionally, DNA-binding transcription factor that specifically binds heat shock promoter elements (HSE) and activates transcription. With HSP90, is required for the modulation of the chaperone levels in response to growth temperature, rather than the activation of acute responses to sudden thermal transitions. Activated during infection and contributes to full virulence. In Candida albicans (strain SC5314 / ATCC MYA-2876) (Yeast), this protein is Heat shock transcription factor.